We begin with the raw amino-acid sequence, 115 residues long: NADH-ubiquinone oxidoreductase chain 3 (115 aa).

Transmembrane regions (helical) follow at residues 5 to 25, 55 to 75, and 86 to 106; these read TALL…FWFF, FFLV…LLPL, and IMML…AYEW.

Belongs to the complex I subunit 3 family. In terms of assembly, core subunit of respiratory chain NADH dehydrogenase (Complex I) which is composed of 45 different subunits. Interacts with TMEM186. Interacts with TMEM242.

It localises to the mitochondrion inner membrane. The catalysed reaction is a ubiquinone + NADH + 5 H(+)(in) = a ubiquinol + NAD(+) + 4 H(+)(out). Core subunit of the mitochondrial membrane respiratory chain NADH dehydrogenase (Complex I) which catalyzes electron transfer from NADH through the respiratory chain, using ubiquinone as an electron acceptor. Essential for the catalytic activity of complex I. This chain is NADH-ubiquinone oxidoreductase chain 3, found in Peromyscus sejugis (Santa Cruz mouse).